Here is a 353-residue protein sequence, read N- to C-terminus: Photosystem II protein D1 (353 aa).

Residue Thr2 is modified to N-acetylthreonine. Phosphothreonine is present on Thr2. 3 consecutive transmembrane segments (helical) span residues 29-46 (YIGW…TATS), 118-133 (HFLL…EWEL), and 142-156 (WIAV…AATA). His118 provides a ligand contact to chlorophyll a. A pheophytin a-binding site is contributed by Tyr126. [CaMn4O5] cluster is bound by residues Asp170 and Glu189. The chain crosses the membrane as a helical span at residues 197–218 (FHMLGVAGVFGGSLFSAMHGSL). A chlorophyll a-binding site is contributed by His198. Residues His215 and 264–265 (SF) contribute to the a quinone site. His215 is a binding site for Fe cation. Residue His272 coordinates Fe cation. Residues 274-288 (FLTAWPVVGIWFTAL) form a helical membrane-spanning segment. [CaMn4O5] cluster contacts are provided by His332, Glu333, Asp342, and Ala344. The propeptide occupies 345–353 (AVEAPSTNG).

The protein belongs to the reaction center PufL/M/PsbA/D family. As to quaternary structure, PSII is composed of 1 copy each of membrane proteins PsbA, PsbB, PsbC, PsbD, PsbE, PsbF, PsbH, PsbI, PsbJ, PsbK, PsbL, PsbM, PsbT, PsbX, PsbY, PsbZ, Psb30/Ycf12, at least 3 peripheral proteins of the oxygen-evolving complex and a large number of cofactors. It forms dimeric complexes. The D1/D2 heterodimer binds P680, chlorophylls that are the primary electron donor of PSII, and subsequent electron acceptors. It shares a non-heme iron and each subunit binds pheophytin, quinone, additional chlorophylls, carotenoids and lipids. D1 provides most of the ligands for the Mn4-Ca-O5 cluster of the oxygen-evolving complex (OEC). There is also a Cl(-1) ion associated with D1 and D2, which is required for oxygen evolution. The PSII complex binds additional chlorophylls, carotenoids and specific lipids. is required as a cofactor. In terms of processing, tyr-161 forms a radical intermediate that is referred to as redox-active TyrZ, YZ or Y-Z. Post-translationally, C-terminally processed by CTPA; processing is essential to allow assembly of the oxygen-evolving complex and thus photosynthetic growth.

It localises to the plastid. The protein localises to the chloroplast thylakoid membrane. It catalyses the reaction 2 a plastoquinone + 4 hnu + 2 H2O = 2 a plastoquinol + O2. Its function is as follows. Photosystem II (PSII) is a light-driven water:plastoquinone oxidoreductase that uses light energy to abstract electrons from H(2)O, generating O(2) and a proton gradient subsequently used for ATP formation. It consists of a core antenna complex that captures photons, and an electron transfer chain that converts photonic excitation into a charge separation. The D1/D2 (PsbA/PsbD) reaction center heterodimer binds P680, the primary electron donor of PSII as well as several subsequent electron acceptors. This Barbarea verna (Land cress) protein is Photosystem II protein D1.